A 230-amino-acid polypeptide reads, in one-letter code: Ribonuclease HII (230 aa).

The RNase H type-2 domain maps to Phe28–Asp217. 3 residues coordinate a divalent metal cation: Asp34, Glu35, and Asp126. The disordered stretch occupies residues His211 to Phe230.

This sequence belongs to the RNase HII family. It depends on Mn(2+) as a cofactor. Mg(2+) serves as cofactor.

The protein localises to the cytoplasm. It catalyses the reaction Endonucleolytic cleavage to 5'-phosphomonoester.. Functionally, endonuclease that specifically degrades the RNA of RNA-DNA hybrids. This chain is Ribonuclease HII, found in Geobacter sp. (strain M21).